The primary structure comprises 441 residues: Xylose isomerase (441 aa).

Residues histidine 99 and aspartate 102 contribute to the active site. Mn(2+)-binding residues include glutamate 230, glutamate 266, aspartate 294, aspartate 305, aspartate 307, and aspartate 337.

The protein belongs to the xylose isomerase family. In terms of assembly, homotetramer. Mn(2+) serves as cofactor.

The protein resides in the cytoplasm. The catalysed reaction is alpha-D-xylose = alpha-D-xylulofuranose. This Geobacillus stearothermophilus (Bacillus stearothermophilus) protein is Xylose isomerase (xylA).